A 130-amino-acid chain; its full sequence is MTNAVLNEKNHSVTSEETKKERVRILAPRVDIYSDEENIYLLADLPGVEEKDVQVQLEKDQLIISGKTSNKDIQGELRYSEFRTGEYKRTFTLTESVEEDRISAVYKNGVLNLTLPKRKPLTKKIEVRSE.

The region spanning 21-130 (ERVRILAPRV…LTKKIEVRSE (110 aa)) is the sHSP domain.

This sequence belongs to the small heat shock protein (HSP20) family.

The chain is Probable 15 kDa heat shock protein (hsp15) from Leptospira interrogans serogroup Icterohaemorrhagiae serovar Lai (strain 56601).